Here is a 302-residue protein sequence, read N- to C-terminus: Sulfate adenylyltransferase subunit 2 (302 aa).

It belongs to the PAPS reductase family. CysD subfamily. Heterodimer composed of CysD, the smaller subunit, and CysN.

It catalyses the reaction sulfate + ATP + H(+) = adenosine 5'-phosphosulfate + diphosphate. The protein operates within sulfur metabolism; hydrogen sulfide biosynthesis; sulfite from sulfate: step 1/3. Functionally, with CysN forms the ATP sulfurylase (ATPS) that catalyzes the adenylation of sulfate producing adenosine 5'-phosphosulfate (APS) and diphosphate, the first enzymatic step in sulfur assimilation pathway. APS synthesis involves the formation of a high-energy phosphoric-sulfuric acid anhydride bond driven by GTP hydrolysis by CysN coupled to ATP hydrolysis by CysD. The polypeptide is Sulfate adenylyltransferase subunit 2 (Klebsiella pneumoniae (strain 342)).